A 179-amino-acid polypeptide reads, in one-letter code: Peptide deformylase (179 aa).

Fe cation-binding residues include Cys102 and His144. Glu145 is a catalytic residue. His148 lines the Fe cation pocket.

Belongs to the polypeptide deformylase family. The cofactor is Fe(2+).

It carries out the reaction N-terminal N-formyl-L-methionyl-[peptide] + H2O = N-terminal L-methionyl-[peptide] + formate. Removes the formyl group from the N-terminal Met of newly synthesized proteins. Requires at least a dipeptide for an efficient rate of reaction. N-terminal L-methionine is a prerequisite for activity but the enzyme has broad specificity at other positions. The sequence is that of Peptide deformylase from Wolbachia sp. subsp. Brugia malayi (strain TRS).